The following is a 166-amino-acid chain: Large ribosomal subunit protein uL10 (166 aa).

This sequence belongs to the universal ribosomal protein uL10 family. As to quaternary structure, part of the ribosomal stalk of the 50S ribosomal subunit. The N-terminus interacts with L11 and the large rRNA to form the base of the stalk. The C-terminus forms an elongated spine to which L12 dimers bind in a sequential fashion forming a multimeric L10(L12)X complex.

Functionally, forms part of the ribosomal stalk, playing a central role in the interaction of the ribosome with GTP-bound translation factors. The protein is Large ribosomal subunit protein uL10 of Bacillus mycoides (strain KBAB4) (Bacillus weihenstephanensis).